The chain runs to 736 residues: Transcription factor E2F8 (736 aa).

The segment at 1 to 26 (MEEGSKENCGFNGSPMGSRSPPKQLT) is disordered. Residues 15–26 (PMGSRSPPKQLT) are compositionally biased toward polar residues. DNA-binding regions lie at residues 98 to 167 (RKEK…IWHG) and 240 to 326 (RKEK…QWTC). Disordered stretches follow at residues 386-405 (RRKI…GSSS), 435-456 (SACK…QTPT), 483-551 (EQTL…AVDD), and 716-736 (PGGM…GTDD). The span at 393–405 (PSSPIKSGDGSSS) shows a compositional bias: low complexity. Composition is skewed to basic and acidic residues over residues 509–539 (GRHE…DRGC) and 726–736 (SARKLDVGTDD).

Belongs to the E2F/DP family. As to quaternary structure, homodimer and heterodimer: mainly forms homodimers and, to a lesser extent, heterodimers with e2f7.

Its subcellular location is the nucleus. In terms of biological role, atypical E2F transcription factor that participates in various processes such as angiogenesis and polyploidization of specialized cells. Mainly acts as a transcription repressor that binds DNA independently of DP proteins and specifically recognizes the E2 recognition site 5'-TTTC[CG]CGC-3'. Directly represses transcription of classical E2F transcription factors such as e2f1. Acts as a regulator of S-phase by recognizing and binding the E2-related site 5'-TTCCCGCC-3' and mediating repression of G1/S-regulated genes. Acts as a promoter of sprouting angiogenesis, possibly by acting as a transcription activator. This chain is Transcription factor E2F8 (e2f8), found in Xenopus tropicalis (Western clawed frog).